A 269-amino-acid chain; its full sequence is Probable membrane transporter protein YfcA (269 aa).

Topologically, residues 1–7 (METFNSL) are periplasmic. A helical transmembrane segment spans residues 8 to 28 (FMVSPLLLGVLFFVAMLAGFI). Topologically, residues 29 to 30 (DS) are cytoplasmic. The chain crosses the membrane as a helical span at residues 31 to 51 (IAGGGGLLTIPALMAAGMSPA). The Periplasmic segment spans residues 52-84 (NALATNKLQACGGSISATIYFIRRKVVSLSDQK). The chain crosses the membrane as a helical span at residues 85–105 (LNIAMTFVGSMSGALLVQYVQ). The Cytoplasmic segment spans residues 106-111 (ADVLRQ). The chain crosses the membrane as a helical span at residues 112 to 132 (ILPILVICIGLYFLLMPKLGE). Topologically, residues 133-156 (EDRQRRMYGLPFALIAGGCVGFYD) are periplasmic. Residues 157-177 (GFFGPAAGSFYALAFVTLCGF) traverse the membrane as a helical segment. Residues 178–197 (NLAKATAHAKLLNATSNIGG) are Cytoplasmic-facing. Residues 198 to 218 (LLLFILGGKVIWATGFVMLVG) form a helical membrane-spanning segment. Over 219-269 (QFLGARMGSRLVLSKGQKLIRPMIVIVSAVMSAKLLYDSHGQEILHWLGMN) the chain is Periplasmic.

The protein belongs to the 4-toluene sulfonate uptake permease (TSUP) (TC 2.A.102) family.

Its subcellular location is the cell inner membrane. This chain is Probable membrane transporter protein YfcA (yfcA), found in Escherichia coli O157:H7.